Consider the following 1293-residue polypeptide: Galactose/N-acetyl-D-galactosamine lectin heavy subunit 1 (1293 aa).

The N-terminal stretch at methionine 1–alanine 15 is a signal peptide. Over aspartate 16–threonine 1234 the chain is Extracellular. Residues asparagine 95, asparagine 198, asparagine 234, asparagine 261, asparagine 337, asparagine 377, asparagine 390, asparagine 468, asparagine 487, asparagine 643, asparagine 659, asparagine 890, asparagine 992, asparagine 1138, asparagine 1204, and asparagine 1214 are each glycosylated (N-linked (GlcNAc...) asparagine). Residues threonine 1235 to phenylalanine 1255 traverse the membrane as a helical segment. Over lysine 1256–glycine 1293 the chain is Cytoplasmic.

In terms of assembly, heterodimer composed of a 170 kDa heavy subunit (hgl) and a 31/35 kDa light subunit (lgl); disulfide-linked. Post-translationally, N-glycosylated.

It is found in the cell membrane. Functionally, lectin which binds galactose and N-acetyl-D-galactosamine of host glycoproteins and thus mediates adhesion to host cells. Mediates adherence to host colonic mucins, an essential step for pathogenic tissue invasion. This Entamoeba histolytica (strain ATCC 30459 / HM-1:IMSS / ABRM) protein is Galactose/N-acetyl-D-galactosamine lectin heavy subunit 1.